The chain runs to 1940 residues: Myosin-2 (1940 aa).

In terms of domain architecture, Myosin N-terminal SH3-like spans 33–82 (DAKTSVFVAEPKESFVKGTIQSREGGKVTVKTEGGATLTVKEDQVFPMNP). Thr-64 and Thr-69 each carry phosphothreonine. In terms of domain architecture, Myosin motor spans 86–783 (DKIEDMAMMT…LLGLLEEMRD (698 aa)). The residue at position 130 (Lys-130) is an N6,N6,N6-trimethyllysine. 179–186 (GESGAGKT) provides a ligand contact to ATP. Position 389 is a phosphotyrosine (Tyr-389). Ser-392 is modified (phosphoserine). At Thr-419 the chain carries Phosphothreonine. A Phosphoserine modification is found at Ser-625. An actin-binding region spans residues 660–682 (LNKLMTNLRSTHPHFVRCIIPNE). Residue His-758 is modified to Pros-methylhistidine. An actin-binding region spans residues 762–776 (KFGHTKVFFKAGLLG). One can recognise an IQ domain in the interval 786-815 (LAQLMTRTQARCRGFLARVEYQKMVERRES). Positions 844–1940 (LLKSAETEKE…EVHTKIISEE (1097 aa)) form a coiled coil. Residues Ser-1093, Ser-1097, Ser-1163, and Ser-1238 each carry the phosphoserine modification. Residue Thr-1242 is modified to Phosphothreonine. Ser-1244 carries the phosphoserine modification. Phosphothreonine is present on residues Thr-1256 and Thr-1287. Phosphoserine is present on residues Ser-1289, Ser-1293, Ser-1304, and Ser-1307. Tyr-1465 carries the post-translational modification Phosphotyrosine. A Phosphothreonine modification is found at Thr-1468. Position 1493 is a phosphotyrosine (Tyr-1493). Ser-1496 carries the phosphoserine modification. Thr-1502 is subject to Phosphothreonine. Position 1515 is a phosphoserine (Ser-1515). Thr-1518 is modified (phosphothreonine). 6 positions are modified to phosphoserine: Ser-1543, Ser-1555, Ser-1575, Ser-1601, Ser-1715, and Ser-1727. Phosphothreonine is present on residues Thr-1731 and Thr-1737. The segment at 1886-1905 (QAEEAEEQSNTNLSKFRKLQ) is disordered.

The protein belongs to the TRAFAC class myosin-kinesin ATPase superfamily. Myosin family. In terms of assembly, muscle myosin is a hexameric protein that consists of 2 heavy chain subunits (MHC), 2 alkali light chain subunits (MLC) and 2 regulatory light chain subunits (MLC-2). Interacts with GCSAM.

It is found in the cytoplasm. It localises to the myofibril. Its function is as follows. Myosins are actin-based motor molecules with ATPase activity essential for muscle contraction. The chain is Myosin-2 (MYH2) from Bos taurus (Bovine).